The sequence spans 373 residues: tRNA-specific 2-thiouridylase MnmA (373 aa).

ATP is bound by residues 12–19 (GMSGGVDS) and Met38. Residues 98–100 (NPD) are interaction with target base in tRNA. Catalysis depends on Cys103, which acts as the Nucleophile. Cysteines 103 and 200 form a disulfide. An ATP-binding site is contributed by Gly127. An interaction with tRNA region spans residues 150-152 (KDQ). Residue Cys200 is the Cysteine persulfide intermediate of the active site. The interval 312–313 (RY) is interaction with tRNA.

It belongs to the MnmA/TRMU family.

It localises to the cytoplasm. It catalyses the reaction S-sulfanyl-L-cysteinyl-[protein] + uridine(34) in tRNA + AH2 + ATP = 2-thiouridine(34) in tRNA + L-cysteinyl-[protein] + A + AMP + diphosphate + H(+). Functionally, catalyzes the 2-thiolation of uridine at the wobble position (U34) of tRNA, leading to the formation of s(2)U34. This Streptococcus pyogenes serotype M2 (strain MGAS10270) protein is tRNA-specific 2-thiouridylase MnmA.